A 176-amino-acid polypeptide reads, in one-letter code: Ribosome maturation factor RimM (176 aa).

A PRC barrel domain is found at 100–173; that stretch reads KDEYHYHDLI…WLLINPPPGL (74 aa).

This sequence belongs to the RimM family. As to quaternary structure, binds ribosomal protein uS19.

It localises to the cytoplasm. Functionally, an accessory protein needed during the final step in the assembly of 30S ribosomal subunit, possibly for assembly of the head region. Essential for efficient processing of 16S rRNA. May be needed both before and after RbfA during the maturation of 16S rRNA. It has affinity for free ribosomal 30S subunits but not for 70S ribosomes. The protein is Ribosome maturation factor RimM of Prochlorococcus marinus (strain NATL2A).